The chain runs to 233 residues: Octanoyltransferase (233 aa).

The region spanning 36 to 211 (DTTPDEIWLV…EFTRQLGYPT (176 aa)) is the BPL/LPL catalytic domain. Substrate is bound by residues 75-82 (RGGQVTYH), 142-144 (SLG), and 155-157 (GLA). Residue C173 is the Acyl-thioester intermediate of the active site.

This sequence belongs to the LipB family.

The protein localises to the cytoplasm. It catalyses the reaction octanoyl-[ACP] + L-lysyl-[protein] = N(6)-octanoyl-L-lysyl-[protein] + holo-[ACP] + H(+). It participates in protein modification; protein lipoylation via endogenous pathway; protein N(6)-(lipoyl)lysine from octanoyl-[acyl-carrier-protein]: step 1/2. Catalyzes the transfer of endogenously produced octanoic acid from octanoyl-acyl-carrier-protein onto the lipoyl domains of lipoate-dependent enzymes. Lipoyl-ACP can also act as a substrate although octanoyl-ACP is likely to be the physiological substrate. This chain is Octanoyltransferase, found in Yersinia pseudotuberculosis serotype O:3 (strain YPIII).